The following is a 173-amino-acid chain: Acireductone dioxygenase 1 (173 aa).

Fe(2+)-binding residues include His96, His98, Glu102, and His140. 4 residues coordinate Ni(2+): His96, His98, Glu102, and His140.

The protein belongs to the acireductone dioxygenase (ARD) family. As to quaternary structure, monomer. Fe(2+) is required as a cofactor. It depends on Ni(2+) as a cofactor.

The catalysed reaction is 1,2-dihydroxy-5-(methylsulfanyl)pent-1-en-3-one + O2 = 3-(methylsulfanyl)propanoate + CO + formate + 2 H(+). The enzyme catalyses 1,2-dihydroxy-5-(methylsulfanyl)pent-1-en-3-one + O2 = 4-methylsulfanyl-2-oxobutanoate + formate + 2 H(+). Its pathway is amino-acid biosynthesis; L-methionine biosynthesis via salvage pathway; L-methionine from S-methyl-5-thio-alpha-D-ribose 1-phosphate: step 5/6. In terms of biological role, catalyzes 2 different reactions between oxygen and the acireductone 1,2-dihydroxy-3-keto-5-methylthiopentene (DHK-MTPene) depending upon the metal bound in the active site. Fe-containing acireductone dioxygenase (Fe-ARD) produces formate and 2-keto-4-methylthiobutyrate (KMTB), the alpha-ketoacid precursor of methionine in the methionine recycle pathway. Ni-containing acireductone dioxygenase (Ni-ARD) produces methylthiopropionate, carbon monoxide and formate, and does not lie on the methionine recycle pathway. In Pectobacterium atrosepticum (strain SCRI 1043 / ATCC BAA-672) (Erwinia carotovora subsp. atroseptica), this protein is Acireductone dioxygenase 1.